Reading from the N-terminus, the 141-residue chain is Meiotically up-regulated gene 118 protein (141 aa).

Residues 106–115 are compositionally biased toward polar residues; the sequence is LSSQKSARQP. The disordered stretch occupies residues 106–141; it reads LSSQKSARQPTKTVASSSSSSSKSTTVSKSSSKSQV. Positions 116 to 141 are enriched in low complexity; sequence TKTVASSSSSSSKSTTVSKSSSKSQV.

Its subcellular location is the nucleus. Functionally, has a role in meiosis. The protein is Meiotically up-regulated gene 118 protein (mug118) of Schizosaccharomyces pombe (strain 972 / ATCC 24843) (Fission yeast).